Consider the following 569-residue polypeptide: AsmA family protein YicH (569 aa).

The Cytoplasmic segment spans residues 1–6; it reads MKFIGK. The helical transmembrane segment at 7 to 27 threads the bilayer; it reads LLLYILIALLVAIAGLYFLLQ. At 28–569 the chain is on the periplasmic side; sequence TRWGAEHISA…GEVTSTEPVR (542 aa).

This sequence belongs to the AsmA family.

It is found in the cell inner membrane. The protein is AsmA family protein YicH (yicH) of Escherichia coli (strain K12).